The following is a 1102-amino-acid chain: Phosphatidylinositol 4,5-bisphosphate 3-kinase catalytic subunit gamma isoform (1102 aa).

The 108-residue stretch at 34 to 141 (SMELIPIEFV…PGQIHVVQRH (108 aa)) folds into the PI3K-ABD domain. The region spanning 217–309 (NNCVFIVIHR…GEEIHLVLDT (93 aa)) is the PI3K-RBD domain. The C2 PI3K-type domain occupies 357 to 521 (CDRKFRVKIR…NSMSISILLD (165 aa)). The region spanning 541-723 (DRVRAEMPNQ…AVILEAYLRG (183 aa)) is the PIK helical domain. The 284-residue stretch at 797–1080 (VIEKCKVMAS…QIEVCRDKGW (284 aa)) folds into the PI3K/PI4K catalytic domain. Residues 803 to 809 (VMASKKK) form a G-loop region. Residues 829–838 (GIIFKHGDDL) and 864–872 (LLPYGCIST) contribute to the ATP site. Residues 943–951 (GIGDRHNDN) are catalytic loop. 961–969 (FHIDFGHIL) is an ATP binding site. The interval 962–988 (HIDFGHILGNYKSFLGINKERVPFVLT) is activation loop. T1024 carries the post-translational modification Phosphothreonine; by PKA. S1101 bears the Phosphoserine; by autocatalysis mark.

Belongs to the PI3/PI4-kinase family. In terms of assembly, heterodimer of a catalytic subunit PIK3CG and a PIK3R5 or PIK3R6 regulatory subunit. Interacts with GRK2 through the PIK helical domain. Interaction with GRK2 is required for targeting to agonist-occupied receptor. Interacts with PDE3B; regulates PDE3B activity and thereby cAMP levels in cells. Interacts with TPM2. Interacts with EPHA8; regulates integrin-mediated cell adhesion to substrate. Interacts with HRAS; the interaction is required for membrane recruitment and beta-gamma G protein dimer-dependent activation of the PI3K gamma complex PIK3CG:PIK3R6. Autophosphorylation at Ser-1101 has no effect on the phosphatidylinositol-4,5-bisphosphate 3-kinase activity.

The protein resides in the cytoplasm. Its subcellular location is the cell membrane. It catalyses the reaction a 1,2-diacyl-sn-glycero-3-phospho-(1D-myo-inositol-4,5-bisphosphate) + ATP = a 1,2-diacyl-sn-glycero-3-phospho-(1D-myo-inositol-3,4,5-trisphosphate) + ADP + H(+). The catalysed reaction is a 1,2-diacyl-sn-glycero-3-phospho-(1D-myo-inositol) + ATP = a 1,2-diacyl-sn-glycero-3-phospho-(1D-myo-inositol-3-phosphate) + ADP + H(+). The enzyme catalyses a 1,2-diacyl-sn-glycero-3-phospho-(1D-myo-inositol 4-phosphate) + ATP = a 1,2-diacyl-sn-glycero-3-phospho-(1D-myo-inositol-3,4-bisphosphate) + ADP + H(+). It carries out the reaction L-seryl-[protein] + ATP = O-phospho-L-seryl-[protein] + ADP + H(+). It functions in the pathway phospholipid metabolism; phosphatidylinositol phosphate biosynthesis. With respect to regulation, activated by both the alpha and the beta-gamma G proteins following stimulation of G protein-coupled receptors (GPCRs). Activation by GPCRs is assisted by the regulatory subunits (PIK3R5 or PIK3R6) leading to the translocation from the cytosol to the plasma membrane and to kinase activation. When bound to PIK3R5 the PI3K activity of PIK3CG could be activated greater than 100-fold by the beta-gamma G proteins. Functionally, phosphoinositide-3-kinase (PI3K) that phosphorylates PtdIns(4,5)P2 (Phosphatidylinositol 4,5-bisphosphate) to generate phosphatidylinositol 3,4,5-trisphosphate (PIP3). PIP3 plays a key role by recruiting PH domain-containing proteins to the membrane, including AKT1 and PDPK1, activating signaling cascades involved in cell growth, survival, proliferation, motility and morphology. Links G-protein coupled receptor activation to PIP3 production. Involved in immune, inflammatory and allergic responses. Modulates leukocyte chemotaxis to inflammatory sites and in response to chemoattractant agents. May control leukocyte polarization and migration by regulating the spatial accumulation of PIP3 and by regulating the organization of F-actin formation and integrin-based adhesion at the leading edge. Controls motility of dendritic cells. Participates in T-lymphocyte migration. Regulates T-lymphocyte proliferation and cytokine production. Required for B-lymphocyte development and signaling. Together with other PI3Ks are involved in the oxidative burst produced by neutrophils in response to chemotactic agents. Together with PIK3CD regulate neutrophil extravasation. Together with PIK3CB promotes platelet aggregation and thrombosis. Regulates alpha-IIb/beta-3 integrins (ITGA2B/ ITGB3) adhesive function in platelets downstream of P2Y12 through a lipid kinase activity-independent mechanism. May have also a lipid kinase activity-dependent function in platelet aggregation. Involved in endothelial progenitor cell migration. Negative regulator of cardiac contractility. Modulates cardiac contractility by anchoring protein kinase A (PKA) and PDE3B activation, reducing cAMP levels. Regulates cardiac contractility also by promoting beta-adrenergic receptor internalization by binding to GRK2 and by non-muscle tropomyosin phosphorylation. Also has serine/threonine protein kinase activity: both lipid and protein kinase activities are required for beta-adrenergic receptor endocytosis. May also have a scaffolding role in modulating cardiac contractility. Contribute to cardiac hypertrophy under pathological stress. Through simultaneous binding of PDE3B to RAPGEF3 and PIK3R6 is assembled in a signaling complex in which the PI3K gamma complex is activated by RAPGEF3 and which is involved in angiogenesis. In neutrophils, participates in a phospholipase C-activating N-formyl peptide-activated GPCR (G protein-coupled receptor) signaling pathway downstream of RASGRP4-mediated Ras-activation, to promote neutrophil functional responses. This Sus scrofa (Pig) protein is Phosphatidylinositol 4,5-bisphosphate 3-kinase catalytic subunit gamma isoform (PIK3CG).